A 367-amino-acid polypeptide reads, in one-letter code: Putative zinc metalloprotease mll0638 (367 aa).

H20 serves as a coordination point for Zn(2+). Residue E21 is part of the active site. H24 provides a ligand contact to Zn(2+). Transmembrane regions (helical) follow at residues 108-130 (ATVVAGPLFNFLLTIVVFSVLFA), 291-313 (LGFEWLVQLVALLSVGIGFLNLL), and 343-365 (MAYRAGLLLVLCFMGFVFWNDLF). Positions 121–196 (TIVVFSVLFA…ITFVMLRDGK (76 aa)) constitute a PDZ domain.

The protein belongs to the peptidase M50B family. The cofactor is Zn(2+).

Its subcellular location is the cell inner membrane. This Mesorhizobium japonicum (strain LMG 29417 / CECT 9101 / MAFF 303099) (Mesorhizobium loti (strain MAFF 303099)) protein is Putative zinc metalloprotease mll0638.